A 430-amino-acid polypeptide reads, in one-letter code: MRASISKSSIKGEVFAPPSKSYTHRAITLAALSKESIIHRPLLSADTLATIRASEMFGAAVRREKENLIIQGSNGKPGIPDDVIDAANSGTTLRFMTAIAGLTDGITVLTGDSSLRTRPNGPLLEVLNRLGAKACSTRGNERAPIVVKGGIKGSEVEISGSISSQFISALLIACPLAENSTTLSIIGKLKSRPYVDVTIEMLGLAGVKIHTDDNNGTKFIIPGKQKYDLKQYTVPGDFSSASYLLAAAAMLEGSEITVKNLFPSKQGDKVIIDTLKQMGADITWDMEAGIVTVRGGRKLKAITFDAGSTPDLVPTVAVLASVAEGTSRIENAEHVRYKETDRLHALATELPKMGVSLKEEMDSLTITGGTLEGAEVHGWDDHRIVMSLAIAGMVAGNTIVDTTESVSISYPDFFKDMRNLGAKVKEIPEE.

Residues lysine 20, serine 21, and arginine 25 each coordinate 3-phosphoshikimate. Lysine 20 contributes to the phosphoenolpyruvate binding site. 2 residues coordinate phosphoenolpyruvate: glycine 90 and arginine 118. The 3-phosphoshikimate site is built by serine 163, serine 164, glutamine 165, serine 191, aspartate 311, and lysine 338. Glutamine 165 provides a ligand contact to phosphoenolpyruvate. The Proton acceptor role is filled by aspartate 311. Phosphoenolpyruvate-binding residues include arginine 342 and arginine 383.

Belongs to the EPSP synthase family. Monomer.

It localises to the cytoplasm. The enzyme catalyses 3-phosphoshikimate + phosphoenolpyruvate = 5-O-(1-carboxyvinyl)-3-phosphoshikimate + phosphate. The protein operates within metabolic intermediate biosynthesis; chorismate biosynthesis. Its function is as follows. Catalyzes the transfer of the enolpyruvyl moiety of phosphoenolpyruvate (PEP) to the 5-hydroxyl of shikimate-3-phosphate (S3P) to produce enolpyruvyl shikimate-3-phosphate and inorganic phosphate. The polypeptide is 3-phosphoshikimate 1-carboxyvinyltransferase (Methanosarcina mazei (strain ATCC BAA-159 / DSM 3647 / Goe1 / Go1 / JCM 11833 / OCM 88) (Methanosarcina frisia)).